The chain runs to 187 residues: dTTP/UTP pyrophosphatase (187 aa).

The active-site Proton acceptor is Asp65.

It belongs to the Maf family. YhdE subfamily. It depends on a divalent metal cation as a cofactor.

It localises to the cytoplasm. The catalysed reaction is dTTP + H2O = dTMP + diphosphate + H(+). It catalyses the reaction UTP + H2O = UMP + diphosphate + H(+). In terms of biological role, nucleoside triphosphate pyrophosphatase that hydrolyzes dTTP and UTP. May have a dual role in cell division arrest and in preventing the incorporation of modified nucleotides into cellular nucleic acids. The sequence is that of dTTP/UTP pyrophosphatase from Deinococcus geothermalis (strain DSM 11300 / CIP 105573 / AG-3a).